We begin with the raw amino-acid sequence, 291 residues long: Segregation and condensation protein B (291 aa).

This sequence belongs to the ScpB family. Homodimer. Homodimerization may be required to stabilize the binding of ScpA to the Smc head domains. Component of a cohesin-like complex composed of ScpA, ScpB and the Smc homodimer, in which ScpA and ScpB bind to the head domain of Smc. The presence of the three proteins is required for the association of the complex with DNA.

It is found in the cytoplasm. Its function is as follows. Participates in chromosomal partition during cell division. May act via the formation of a condensin-like complex containing Smc and ScpA that pull DNA away from mid-cell into both cell halves. The sequence is that of Segregation and condensation protein B from Mycoplasmoides gallisepticum (strain R(low / passage 15 / clone 2)) (Mycoplasma gallisepticum).